The sequence spans 175 residues: Large ribosomal subunit protein uL10 (175 aa).

This sequence belongs to the universal ribosomal protein uL10 family. Part of the ribosomal stalk of the 50S ribosomal subunit. The N-terminus interacts with L11 and the large rRNA to form the base of the stalk. The C-terminus forms an elongated spine to which L12 dimers bind in a sequential fashion forming a multimeric L10(L12)X complex.

Functionally, forms part of the ribosomal stalk, playing a central role in the interaction of the ribosome with GTP-bound translation factors. This is Large ribosomal subunit protein uL10 from Pelotomaculum thermopropionicum (strain DSM 13744 / JCM 10971 / SI).